A 1105-amino-acid chain; its full sequence is Integrator complex subunit 2 (1105 aa).

A helical membrane pass occupies residues 822–842 (FVFCSPYLLMILLRILKGSLA).

Belongs to the Integrator subunit 2 family. Belongs to the multiprotein complex Integrator, at least composed of IntS1, IntS2, IntS3, IntS4, omd/IntS5, IntS6, defl/IntS7, IntS8, IntS9, IntS10, IntS11, IntS12, asun/IntS13, IntS14 and IntS15. The core complex associates with protein phosphatase 2A subunits mts/PP2A and Pp2A-29B, to form the Integrator-PP2A (INTAC) complex.

It localises to the nucleus membrane. The protein resides in the nucleus. Functionally, component of the integrator complex, a multiprotein complex that terminates RNA polymerase II (Pol II) transcription in the promoter-proximal region of genes. The integrator complex provides a quality checkpoint during transcription elongation by driving premature transcription termination of transcripts that are unfavorably configured for transcriptional elongation: the complex terminates transcription by (1) catalyzing dephosphorylation of the C-terminal domain (CTD) of Pol II subunit Polr2A/Rbp1 and Spt5, and (2) degrading the exiting nascent RNA transcript via endonuclease activity. The integrator complex is also involved in the 3'-end processing of the U7 snRNA, and also the spliceosomal snRNAs U1, U2, U4 and U5. This chain is Integrator complex subunit 2, found in Drosophila melanogaster (Fruit fly).